A 319-amino-acid polypeptide reads, in one-letter code: Peroxidase 13 (319 aa).

Residues M1 to A22 form the signal peptide. Disulfide bonds link C33-C111, C66-C71, C117-C315, and C196-C222. The active-site Proton acceptor is the H64. Residues D65, V68, G70, D72, and S74 each contribute to the Ca(2+) site. P158 contributes to the substrate binding site. H189 lines the heme b pocket. A Ca(2+)-binding site is contributed by T190. Residues D235, S238, and D243 each coordinate Ca(2+). N280 is a glycosylation site (N-linked (GlcNAc...) asparagine).

The protein belongs to the peroxidase family. Classical plant (class III) peroxidase subfamily. The cofactor is heme b. It depends on Ca(2+) as a cofactor.

The protein localises to the secreted. It catalyses the reaction 2 a phenolic donor + H2O2 = 2 a phenolic radical donor + 2 H2O. Functionally, removal of H(2)O(2), oxidation of toxic reductants, biosynthesis and degradation of lignin, suberization, auxin catabolism, response to environmental stresses such as wounding, pathogen attack and oxidative stress. These functions might be dependent on each isozyme/isoform in each plant tissue. The polypeptide is Peroxidase 13 (PER13) (Arabidopsis thaliana (Mouse-ear cress)).